The sequence spans 687 residues: Probable WRKY transcription factor 2 (687 aa).

The interval 197-276 (YGNYNNRSSS…AGGAPAEDGY (80 aa)) is disordered. Composition is skewed to polar residues over residues 199 to 208 (NYNNRSSSHQ) and 219 to 249 (NIES…TSLE). The segment at residues 267–331 (AGGAPAEDGY…YKGAHNHLKP (65 aa)) is a DNA-binding region (WRKY 1). Zn(2+) contacts are provided by Cys-298, Cys-303, His-326, and His-328. 2 disordered regions span residues 324–384 (GAHN…STRF) and 416–453 (FSND…ESKR). The segment covering 354-379 (RDSAATWVSCNNTQQQGGSNENNVEE) has biased composition (polar residues). Positions 435–444 (YDGGGGGGGG) are enriched in gly residues. Positions 481–546 (SDVDILDDGY…YEGKHNHDVP (66 aa)) form a DNA-binding region, WRKY 2. Residues Cys-512, Cys-517, His-541, and His-543 each contribute to the Zn(2+) site. Residues 537 to 599 (YEGKHNHDVP…QVTTNNQSPF (63 aa)) are disordered. Gly residues predominate over residues 553–565 (HGGGGDSGNGNSG). A compositionally biased stretch (basic and acidic residues) spans 578–589 (HHSEPPRGRFDR). The segment covering 590–599 (QVTTNNQSPF) has biased composition (polar residues).

Belongs to the WRKY group I family. In terms of tissue distribution, low expression in senescent leaves. Expressed in both the unfertilized egg cell and the pollen tube.

It is found in the nucleus. Functionally, transcription factor. Regulates WOX8 and WOX9 expression and basal cell division patterns during early embryogenesis. Interacts specifically with the W box (5'-(T)TGAC[CT]-3'), a frequently occurring elicitor-responsive cis-acting element. Required to repolarize the zygote from a transient symmetric state. This chain is Probable WRKY transcription factor 2, found in Arabidopsis thaliana (Mouse-ear cress).